A 559-amino-acid polypeptide reads, in one-letter code: Neutral amino acid transporter 9 (559 aa).

Topologically, residues 1 to 118 are cytoplasmic; that stretch reads MANVDSDSRH…YTEGYRKNTS (118 aa). A helical membrane pass occupies residues 119 to 139; sequence LVTIFMIWNTMMGTSILSIPW. The interval 128-133 is important for arginine binding and amino acid transport; the sequence is TMMGTS. Serine 133 lines the arginine pocket. Residues 140–145 lie on the Lumenal side of the membrane; it reads GIKQAG. The chain crosses the membrane as a helical span at residues 146 to 166; it reads FTTGMCVIVLMGLLTLYCCYR. Over 167–197 the chain is Cytoplasmic; that stretch reads VVKSRSMIVTSDTTTWEYPDVCKHYFGSFGQ. Residues 198–224 form a helical membrane-spanning segment; sequence WSSLLFSLVSLIGAMIVYWVLMSNFLF. The Lumenal segment spans residues 225 to 281; that stretch reads NTGKFIFNFIHHINDTDTVLSTNNSSPVICPSAGSGHPDNSSMIFYNSDTEVRLFER. Residues asparagine 238, asparagine 247, and asparagine 264 are each glycosylated (N-linked (GlcNAc...) asparagine). A disulfide bridge links cysteine 254 with cysteine 422. The helical transmembrane segment at 282–298 threads the bilayer; the sequence is WWDKSKTVPFYLIGLLL. Residues 299–307 lie on the Cytoplasmic side of the membrane; it reads PLLNFKSPS. A helical transmembrane segment spans residues 308-332; sequence FFSKFNILGTVSVLYLIFIVTLKAI. The Lumenal portion of the chain corresponds to 333-354; that stretch reads RLGFHLEFHWFAPTEFFVPEIR. A helical transmembrane segment spans residues 355 to 375; it reads AQFPQLTGVLTLAFFIHNCII. Over 376–392 the chain is Cytoplasmic; sequence TLLKNNKNQENNVRDLC. A helical membrane pass occupies residues 393–413; it reads IAYMLVTLTYLYIGVLVFASF. Residues 414–435 are Lumenal-facing; the sequence is PSPPLPKDCIEQNFLDNFPSSD. Residues 436 to 456 form a helical membrane-spanning segment; it reads TLSFIARICLLFQMMTVYPLL. The CARC motif motif lies at 442–452; it reads RICLLFQMMTV. A CRAC motif motif is present at residues 455-461; the sequence is LLGYLAR. Over 457–477 the chain is Cytoplasmic; sequence GYLARVQLLGHIFGDIYPSIF. A helical transmembrane segment spans residues 478–498; it reads HVLILNLIIVGAGVTMACFYP. The Lumenal segment spans residues 499–505; it reads NIGGIIR. Residues 506 to 526 traverse the membrane as a helical segment; that stretch reads YSGAACGLAFVFIYPSLIYIL. Topologically, residues 527 to 538 are cytoplasmic; that stretch reads SQHQEERLTWPK. Residues 539–559 traverse the membrane as a helical segment; sequence LVFHIIIIILGLANLIAQFFM.

It belongs to the amino acid/polyamine transporter 2 family. SLC38A9 subfamily. Associated component of the Ragulator complex (composed of LAMTOR1, LAMTOR2, LAMTOR3, LAMTOR4 and LAMTOR5). Associated component of the Rag GTPases heterodimers (composed of RRAGA, RRAGB, RRAGC and RRAGD); this interaction is independent of the Ragulator complex but depends on the nucleotide loading state of the Rag GTPase heterodimer. Interacts with TM4SF5. Interacts with NPC1; this interaction inhibits cholesterol-mediated mTORC1 activation via its sterol transport activity. In terms of processing, glycosylated.

Its subcellular location is the lysosome membrane. The protein localises to the late endosome membrane. It catalyses the reaction L-leucine(in) = L-leucine(out). The enzyme catalyses L-tyrosine(in) = L-tyrosine(out). It carries out the reaction L-glutamine(out) = L-glutamine(in). The catalysed reaction is L-asparagine(out) = L-asparagine(in). Lysosomal amino acid transporter involved in the activation of mTORC1 in response to amino acid levels. Probably acts as an amino acid sensor of the Rag GTPases and Ragulator complexes, 2 complexes involved in amino acid sensing and activation of mTORC1, a signaling complex promoting cell growth in response to growth factors, energy levels, and amino acids. Following activation by amino acids, the Ragulator and Rag GTPases function as a scaffold recruiting mTORC1 to lysosomes where it is in turn activated. SLC38A9 mediates transport of amino acids with low capacity and specificity with a slight preference for polar amino acids. Acts as an arginine sensor. Following activation by arginine binding, mediates transport of L-glutamine, leucine and tyrosine with high efficiency, and is required for the efficient utilization of these amino acids after lysosomal protein degradation. However, the transport mechanism is not well defined and the role of sodium is not clear. Can disassemble the lysosomal folliculin complex (LFC), and thereby triggers GAP activity of FLCN:FNIP2 toward RRAGC. Acts as an cholesterol sensor that conveys increases in lysosomal cholesterol, leading to lysosomal recruitment and activation of mTORC1 via the Rag GTPases. Guanine exchange factor (GEF) that, upon arginine binding, stimulates GDP release from RRAGA and therefore activates the Rag GTPase heterodimer and the mTORC1 pathway in response to nutrient sufficiency. The polypeptide is Neutral amino acid transporter 9 (Rattus norvegicus (Rat)).